A 204-amino-acid polypeptide reads, in one-letter code: MTTVITRKYRISRRLGVNLWGRAKDPVNKRKYPPGQHGILGFKKLSDFGKQFAAHKKFKFYYAISSKQLRRTFLDAYNRKGYTADNFIGILESRLSSVLYHSGLVPTIYSAKQLISHKHVTVNDKVVNISSYRVKPGDIIKIRERAAKIPVVVEAEQKQERKAPDYLEADSKEHSVKYLRSPQYSEVPYSADMEVNLVVEFYSR.

Positions 93–156 (SRLSSVLYHS…AKIPVVVEAE (64 aa)) constitute an S4 RNA-binding domain.

Belongs to the universal ribosomal protein uS4 family. In terms of assembly, part of the 30S ribosomal subunit. Contacts protein S5. The interaction surface between S4 and S5 is involved in control of translational fidelity.

Functionally, one of the primary rRNA binding proteins, it binds directly to 16S rRNA where it nucleates assembly of the body of the 30S subunit. In terms of biological role, with S5 and S12 plays an important role in translational accuracy. This chain is Small ribosomal subunit protein uS4, found in Wolbachia pipientis wMel.